Reading from the N-terminus, the 304-residue chain is Putative S-adenosyl-L-methionine-dependent methyltransferase MMAR_1057 (304 aa).

S-adenosyl-L-methionine is bound by residues D130 and D159–L160.

The protein belongs to the UPF0677 family.

Exhibits S-adenosyl-L-methionine-dependent methyltransferase activity. The polypeptide is Putative S-adenosyl-L-methionine-dependent methyltransferase MMAR_1057 (Mycobacterium marinum (strain ATCC BAA-535 / M)).